A 168-amino-acid polypeptide reads, in one-letter code: Bcl2-associated agonist of cell death (168 aa).

M1 is modified (N-acetylmethionine). A disordered region spans residues 1-105 (MFQIPEFEPS…RSRSAPPNLW (105 aa)). Phosphoserine is present on S25. The segment covering 49-60 (SHQQEQPTSSSH) has biased composition (polar residues). 2 positions are modified to phosphoserine: S75 and S91. 2 positions are modified to asymmetric dimethylarginine; by PRMT1: R94 and R96. S97 carries the post-translational modification Phosphoserine. S99 carries the post-translational modification Phosphoserine; by PKA, PKB, PAK1, RPS6KA1, RPS6KB1 and PKC/PRKCQ. A Phosphoserine; by PKB/AKT1 modification is found at S99. The BH3 motif lies at 110–124 (YGRELRRMSDEFVDS). S118 and S134 each carry phosphoserine. A disordered region spans residues 125 to 145 (FKKGLPRPKSAGTATQMRQSS). Residues 136 to 145 (GTATQMRQSS) show a composition bias toward polar residues. R161 bears the Omega-N-methylarginine mark.

Belongs to the Bcl-2 family. As to quaternary structure, forms heterodimers with the anti-apoptotic proteins, Bcl-X(L), Bcl-2 and Bcl-W. Also binds protein S100A10. The Ser-75/Ser-99 phosphorylated form binds 14-3-3 proteins. Interacts with AKT1 and PIM3. Interacts (via BH3 domain) with NOL3 (via CARD domain); preventing the association of BAD with BCL2. Interacts with HIF3A (via C-terminus domain); the interaction reduces the binding between BAD and BAX. Interacts with GIMAP3/IAN4 and GIMAP5/IAN5. Phosphorylated on one or more of Ser-75, Ser-99, Ser-118 and Ser-134 in response to survival stimuli, which blocks its pro-apoptotic activity. Phosphorylation on Ser-99 or Ser-75 promotes heterodimerization with 14-3-3 proteins. This interaction then facilitates the phosphorylation at Ser-118, a site within the BH3 motif, leading to the release of Bcl-X(L) and the promotion of cell survival. Ser-99 is the major site of AKT/PKB phosphorylation, Ser-118 the major site of protein kinase A (CAPK) phosphorylation. Phosphorylation at Ser-99 by PKB/AKT1 is almost completely blocked by the apoptotic C-terminus cleavage product of PKN2 generated by caspases-3 activity during apoptosis. Post-translationally, methylation at Arg-94 and Arg-96 by PRMT1 inhibits Akt-mediated phosphorylation at Ser-99. Expressed in a wide variety of tissues.

Its subcellular location is the mitochondrion outer membrane. It is found in the cytoplasm. Its function is as follows. Promotes cell death. Successfully competes for the binding to Bcl-X(L), Bcl-2 and Bcl-W, thereby affecting the level of heterodimerization of these proteins with BAX. Can reverse the death repressor activity of Bcl-X(L), but not that of Bcl-2. Appears to act as a link between growth factor receptor signaling and the apoptotic pathways. This chain is Bcl2-associated agonist of cell death (BAD), found in Homo sapiens (Human).